Consider the following 215-residue polypeptide: Pyridoxine/pyridoxamine 5'-phosphate oxidase (215 aa).

Substrate-binding positions include 8–11 and Lys66; that span reads RQEY. Residues 61-66, 76-77, Arg82, Lys83, and Gln105 contribute to the FMN site; these read RIVLLK and YT. Tyr123 and Arg127 together coordinate substrate. FMN-binding positions include 140-141 and Trp186; that span reads QS. 192 to 194 contacts substrate; it reads RLH. Arg196 is an FMN binding site.

Belongs to the pyridoxamine 5'-phosphate oxidase family. Homodimer. It depends on FMN as a cofactor.

The catalysed reaction is pyridoxamine 5'-phosphate + O2 + H2O = pyridoxal 5'-phosphate + H2O2 + NH4(+). The enzyme catalyses pyridoxine 5'-phosphate + O2 = pyridoxal 5'-phosphate + H2O2. It functions in the pathway cofactor metabolism; pyridoxal 5'-phosphate salvage; pyridoxal 5'-phosphate from pyridoxamine 5'-phosphate: step 1/1. It participates in cofactor metabolism; pyridoxal 5'-phosphate salvage; pyridoxal 5'-phosphate from pyridoxine 5'-phosphate: step 1/1. In terms of biological role, catalyzes the oxidation of either pyridoxine 5'-phosphate (PNP) or pyridoxamine 5'-phosphate (PMP) into pyridoxal 5'-phosphate (PLP). The chain is Pyridoxine/pyridoxamine 5'-phosphate oxidase from Salinibacter ruber (strain DSM 13855 / M31).